The sequence spans 368 residues: D-alanine--D-alanine ligase (368 aa).

The 204-residue stretch at 145 to 348 (KRLLQGAGLH…YQDLITTLIE (204 aa)) folds into the ATP-grasp domain. Residue 175-230 (ADQLGLPLFIKPANQGSSVGVNKATTEAEFTAAIEEAFSYDHKVLIEAAIKGREIE) participates in ATP binding. Mg(2+) is bound by residues D302, E315, and N317.

Belongs to the D-alanine--D-alanine ligase family. Mg(2+) is required as a cofactor. Requires Mn(2+) as cofactor.

The protein localises to the cytoplasm. It carries out the reaction 2 D-alanine + ATP = D-alanyl-D-alanine + ADP + phosphate + H(+). The protein operates within cell wall biogenesis; peptidoglycan biosynthesis. Cell wall formation. This chain is D-alanine--D-alanine ligase, found in Shouchella clausii (strain KSM-K16) (Alkalihalobacillus clausii).